The chain runs to 393 residues: NAD(P)H-quinone oxidoreductase subunit H, chloroplastic (393 aa).

This sequence belongs to the complex I 49 kDa subunit family. NDH is composed of at least 16 different subunits, 5 of which are encoded in the nucleus.

It is found in the plastid. Its subcellular location is the chloroplast thylakoid membrane. The enzyme catalyses a plastoquinone + NADH + (n+1) H(+)(in) = a plastoquinol + NAD(+) + n H(+)(out). It carries out the reaction a plastoquinone + NADPH + (n+1) H(+)(in) = a plastoquinol + NADP(+) + n H(+)(out). Its function is as follows. NDH shuttles electrons from NAD(P)H:plastoquinone, via FMN and iron-sulfur (Fe-S) centers, to quinones in the photosynthetic chain and possibly in a chloroplast respiratory chain. The immediate electron acceptor for the enzyme in this species is believed to be plastoquinone. Couples the redox reaction to proton translocation, and thus conserves the redox energy in a proton gradient. This chain is NAD(P)H-quinone oxidoreductase subunit H, chloroplastic, found in Panax ginseng (Korean ginseng).